A 409-amino-acid polypeptide reads, in one-letter code: Elongation factor Tu, chloroplastic (409 aa).

The 205-residue stretch at 10–214 (KPHVNIGTIG…AVDEYIPTPE (205 aa)) folds into the tr-type G domain. Residues 19-26 (GHVDHGKT) are G1. Position 19–26 (19–26 (GHVDHGKT)) interacts with GTP. Residue Thr-26 coordinates Mg(2+). Residues 60–64 (GITIN) are G2. Residues 81–84 (DCPG) form a G3 region. Residues 81 to 85 (DCPGH) and 136 to 139 (NKED) contribute to the GTP site. A G4 region spans residues 136–139 (NKED). Residues 174 to 176 (SAL) form a G5 region.

Belongs to the TRAFAC class translation factor GTPase superfamily. Classic translation factor GTPase family. EF-Tu/EF-1A subfamily.

It is found in the plastid. Its subcellular location is the chloroplast. It carries out the reaction GTP + H2O = GDP + phosphate + H(+). Its function is as follows. GTP hydrolase that promotes the GTP-dependent binding of aminoacyl-tRNA to the A-site of ribosomes during protein biosynthesis. The polypeptide is Elongation factor Tu, chloroplastic (tufA) (Phaeodactylum tricornutum (strain CCAP 1055/1)).